The sequence spans 403 residues: Poly(rC)-binding protein 4 (403 aa).

KH domains follow at residues 17–67, 101–154, and 241–293; these read TLTL…TITG, PVTL…TVSG, and TSSQ…TITG.

Widely expressed, with highest levels in testis and lowest in heart.

The protein resides in the cytoplasm. Functionally, single-stranded nucleic acid binding protein that binds preferentially to oligo dC. The sequence is that of Poly(rC)-binding protein 4 (Pcbp4) from Mus musculus (Mouse).